A 156-amino-acid chain; its full sequence is Transcription antitermination protein NusB (156 aa).

It belongs to the NusB family.

Its function is as follows. Involved in transcription antitermination. Required for transcription of ribosomal RNA (rRNA) genes. Binds specifically to the boxA antiterminator sequence of the ribosomal RNA (rrn) operons. In Rickettsia akari (strain Hartford), this protein is Transcription antitermination protein NusB.